The chain runs to 387 residues: 3-ketoacyl-CoA thiolase (387 aa).

Residue C91 is the Acyl-thioester intermediate of the active site. Catalysis depends on proton acceptor residues H343 and C373.

This sequence belongs to the thiolase-like superfamily. Thiolase family. Heterotetramer of two alpha chains (FadB) and two beta chains (FadA).

It localises to the cytoplasm. The enzyme catalyses an acyl-CoA + acetyl-CoA = a 3-oxoacyl-CoA + CoA. It functions in the pathway lipid metabolism; fatty acid beta-oxidation. Functionally, catalyzes the final step of fatty acid oxidation in which acetyl-CoA is released and the CoA ester of a fatty acid two carbons shorter is formed. The polypeptide is 3-ketoacyl-CoA thiolase (Shewanella denitrificans (strain OS217 / ATCC BAA-1090 / DSM 15013)).